A 45-amino-acid polypeptide reads, in one-letter code: Cytochrome b559 subunit beta (45 aa).

The chain crosses the membrane as a helical span at residues 20–36 (WLALHTLGIPTVFFLGA). Position 24 (His-24) interacts with heme.

It belongs to the PsbE/PsbF family. Heterodimer of an alpha subunit and a beta subunit. PSII is composed of 1 copy each of membrane proteins PsbA, PsbB, PsbC, PsbD, PsbE, PsbF, PsbH, PsbI, PsbJ, PsbK, PsbL, PsbM, PsbT, PsbX, PsbY, PsbZ, Psb30/Ycf12, peripheral proteins PsbO, CyanoQ (PsbQ), PsbU, PsbV and a large number of cofactors. It forms dimeric complexes. Requires heme b as cofactor.

The protein localises to the cellular thylakoid membrane. Its function is as follows. This b-type cytochrome is tightly associated with the reaction center of photosystem II (PSII). PSII is a light-driven water:plastoquinone oxidoreductase that uses light energy to abstract electrons from H(2)O, generating O(2) and a proton gradient subsequently used for ATP formation. It consists of a core antenna complex that captures photons, and an electron transfer chain that converts photonic excitation into a charge separation. The sequence is that of Cytochrome b559 subunit beta from Synechococcus sp. (strain CC9902).